We begin with the raw amino-acid sequence, 196 residues long: Protein LIGHT-DEPENDENT SHORT HYPOCOTYLS 6 (196 aa).

Residues 1-16 (MESADSGRSDPVKGDD) are compositionally biased toward basic and acidic residues. 2 disordered regions span residues 1-36 (MESADSGRSDPVKGDDPGPSFVSSPPATPSRYESQK) and 149-196 (ARGI…AVPP). In terms of domain architecture, ALOG spans 31-158 (RYESQKRRDW…ARGIPYEKKK (128 aa)). Residues 156–160 (KKKRK) carry the Nuclear localization signal motif.

Belongs to the plant homeotic and developmental regulators ALOG protein family.

It is found in the nucleus. Its function is as follows. Probable transcription regulator that acts as a developmental regulator by promoting cell growth in response to light. This Arabidopsis thaliana (Mouse-ear cress) protein is Protein LIGHT-DEPENDENT SHORT HYPOCOTYLS 6 (LSH6).